The following is a 435-amino-acid chain: BAHD acyltransferase BIA1 (435 aa).

Active-site proton acceptor residues include His151 and Asp369.

This sequence belongs to the plant acyltransferase family. Mostly expressed in roots (particularly in the root elongation zone), and, to a lower extent, in seedling, leaves (especially in hydathodes), siliques (e.g. in developing seeds) and flowers.

Its subcellular location is the cytoplasm. Monitors brassinosteroids (BR) responses and homeostasis, particularly in the root and hypocotyl in darkness. Promotes flavonoid biosynthesis. The protein is BAHD acyltransferase BIA1 of Arabidopsis thaliana (Mouse-ear cress).